Reading from the N-terminus, the 116-residue chain is UPF0499 protein ATEG_06693 (116 aa).

The signal sequence occupies residues 1–18 (MKLTGLLSLALLTTLALA). 3 disulfide bridges follow: cysteine 32–cysteine 46, cysteine 36–cysteine 49, and cysteine 42–cysteine 54.

The protein belongs to the UPF0499 family.

It localises to the secreted. The chain is UPF0499 protein ATEG_06693 from Aspergillus terreus (strain NIH 2624 / FGSC A1156).